A 2310-amino-acid polypeptide reads, in one-letter code: Peroxide stress-activated histidine kinase mak2 (2310 aa).

Residues 12–292 form the Protein kinase domain; it reads DYAISQLGEF…SATDLCYTIV (281 aa). The GAF domain maps to 1450-1592; the sequence is RLGPLLTTVI…LLSQQIAISV (143 aa). In terms of domain architecture, Histidine kinase spans 1760–1986; that stretch reads NMSHELRTPF…TFWFHVQLRN (227 aa). Histidine 1763 carries the phosphohistidine; by autocatalysis modification. The region spanning 2180-2303 is the Response regulatory domain; that stretch reads YALIAEDNLI…QLVNAVREFV (124 aa). A 4-aspartylphosphate modification is found at aspartate 2232.

The protein resides in the cytoplasm. The enzyme catalyses ATP + protein L-histidine = ADP + protein N-phospho-L-histidine.. Involved in the control of the SAPK-dependent transcriptional response to peroxide stress. Regulates sty1 activity. The sequence is that of Peroxide stress-activated histidine kinase mak2 (mak2) from Schizosaccharomyces pombe (strain 972 / ATCC 24843) (Fission yeast).